Here is a 172-residue protein sequence, read N- to C-terminus: Ribosome maturation factor RimM (172 aa).

One can recognise a PRC barrel domain in the interval 95–168 (AEGEFYYHQI…RVDVEIMEGL (74 aa)).

This sequence belongs to the RimM family. As to quaternary structure, binds ribosomal protein uS19.

The protein localises to the cytoplasm. Its function is as follows. An accessory protein needed during the final step in the assembly of 30S ribosomal subunit, possibly for assembly of the head region. Essential for efficient processing of 16S rRNA. May be needed both before and after RbfA during the maturation of 16S rRNA. It has affinity for free ribosomal 30S subunits but not for 70S ribosomes. The sequence is that of Ribosome maturation factor RimM from Streptococcus equi subsp. zooepidemicus (strain H70).